Here is a 145-residue protein sequence, read N- to C-terminus: Photosystem I reaction center subunit XI (145 aa).

3 consecutive transmembrane segments (helical) span residues 48–68 (LEIG…LGPL), 75–95 (LLVG…ALTI), and 125–145 (IGAL…SFFA).

The protein belongs to the PsaL family.

It localises to the plastid. The protein localises to the chloroplast thylakoid membrane. This Isochrysis galbana (Marine planktonic alga) protein is Photosystem I reaction center subunit XI.